The following is a 137-amino-acid chain: Large ribosomal subunit protein uL16c (137 aa).

This sequence belongs to the universal ribosomal protein uL16 family. In terms of assembly, part of the 50S ribosomal subunit.

It localises to the plastid. It is found in the chloroplast. This is Large ribosomal subunit protein uL16c from Rhodomonas salina (Cryptomonas salina).